The following is a 355-amino-acid chain: 3-dehydroquinate synthase (355 aa).

Residues 71 to 76 (EGEERK), 105 to 109 (GVVGD), 129 to 130 (TS), Lys142, and Lys151 each bind NAD(+). Zn(2+)-binding residues include Glu184, His246, and His263.

Belongs to the sugar phosphate cyclases superfamily. Dehydroquinate synthase family. The cofactor is Co(2+). Requires Zn(2+) as cofactor. It depends on NAD(+) as a cofactor.

The protein resides in the cytoplasm. It carries out the reaction 7-phospho-2-dehydro-3-deoxy-D-arabino-heptonate = 3-dehydroquinate + phosphate. It functions in the pathway metabolic intermediate biosynthesis; chorismate biosynthesis; chorismate from D-erythrose 4-phosphate and phosphoenolpyruvate: step 2/7. Catalyzes the conversion of 3-deoxy-D-arabino-heptulosonate 7-phosphate (DAHP) to dehydroquinate (DHQ). This Streptococcus pneumoniae serotype 19F (strain G54) protein is 3-dehydroquinate synthase.